The chain runs to 236 residues: MEKREELYRGKAKSVYQTDDADRLILLFRNDTSAFDGKRIEQLDRKGAVNNKFNAFIMQKLEAAGIPTQFDKLLSDTECLVKKLDMIPVECVVRNFAAGSLVRRLGVEEGIALTPPTFELFLKNDALGDPFINESHVQAFGWATPEQLAQMKTYSFKVNEVLNKLFDDAGLLLVDFKLEFGLFHGQIVLGDEFSPDGCRLWDKETRKKMDKDRFRQGLGDVIEAYEEVAKRLGVPL.

The protein belongs to the SAICAR synthetase family.

It catalyses the reaction 5-amino-1-(5-phospho-D-ribosyl)imidazole-4-carboxylate + L-aspartate + ATP = (2S)-2-[5-amino-1-(5-phospho-beta-D-ribosyl)imidazole-4-carboxamido]succinate + ADP + phosphate + 2 H(+). It participates in purine metabolism; IMP biosynthesis via de novo pathway; 5-amino-1-(5-phospho-D-ribosyl)imidazole-4-carboxamide from 5-amino-1-(5-phospho-D-ribosyl)imidazole-4-carboxylate: step 1/2. The polypeptide is Phosphoribosylaminoimidazole-succinocarboxamide synthase (Pseudomonas aeruginosa (strain LESB58)).